We begin with the raw amino-acid sequence, 244 residues long: 5-oxoprolinase subunit A (244 aa).

It belongs to the LamB/PxpA family. Forms a complex composed of PxpA, PxpB and PxpC.

The enzyme catalyses 5-oxo-L-proline + ATP + 2 H2O = L-glutamate + ADP + phosphate + H(+). Functionally, catalyzes the cleavage of 5-oxoproline to form L-glutamate coupled to the hydrolysis of ATP to ADP and inorganic phosphate. This chain is 5-oxoprolinase subunit A, found in Salmonella paratyphi C (strain RKS4594).